A 302-amino-acid polypeptide reads, in one-letter code: Phospho-N-acetylmuramoyl-pentapeptide-transferase (302 aa).

The next 10 helical transmembrane spans lie at 1 to 21, 42 to 62, 67 to 87, 101 to 121, 123 to 143, 154 to 174, 178 to 198, 204 to 224, 229 to 249, and 279 to 299; these read MIAASFLLNLLIYPFLINLFR, GTPTMGGILFVLIGLLFGVLS, VILTGAFLFFLIGFLDDFLSI, ALLQIAAASVVIAFSQPETAV, FFGIKLEMGAWYYLLALIVIV, GLDGLAGWVYISGAIPYWFFL, GFSENIIILLSAGVLAFLIFN, IFMGDTGSIALGGTLGVVSVL, FYLIVFFPILVVETLSVILQI, and IVAVFTIFNLISSLIALEVFG.

Belongs to the glycosyltransferase 4 family. MraY subfamily. It depends on Mg(2+) as a cofactor.

It is found in the cell inner membrane. The enzyme catalyses UDP-N-acetyl-alpha-D-muramoyl-L-alanyl-gamma-D-glutamyl-meso-2,6-diaminopimeloyl-D-alanyl-D-alanine + di-trans,octa-cis-undecaprenyl phosphate = di-trans,octa-cis-undecaprenyl diphospho-N-acetyl-alpha-D-muramoyl-L-alanyl-D-glutamyl-meso-2,6-diaminopimeloyl-D-alanyl-D-alanine + UMP. The protein operates within cell wall biogenesis; peptidoglycan biosynthesis. Its function is as follows. Catalyzes the initial step of the lipid cycle reactions in the biosynthesis of the cell wall peptidoglycan: transfers peptidoglycan precursor phospho-MurNAc-pentapeptide from UDP-MurNAc-pentapeptide onto the lipid carrier undecaprenyl phosphate, yielding undecaprenyl-pyrophosphoryl-MurNAc-pentapeptide, known as lipid I. This Thermotoga neapolitana (strain ATCC 49049 / DSM 4359 / NBRC 107923 / NS-E) protein is Phospho-N-acetylmuramoyl-pentapeptide-transferase.